Here is a 202-residue protein sequence, read N- to C-terminus: MSRYRGPRLRIVRRLGDLPGLTRKSARRAYPPGQHGQNRKKRSEYAIRLEEKQKLRLNYGLTEKQLLRYVRRARRVTGSTGQVLLQLLEMRLDNTVFRLGMAPTIPAARQLVNHGHVTVNGRVVNIASYQCRPGEEIAVRDKAPSRKLVENNLQYPGLANLPSHLEFDKNKLVGKVNSVIEREWVALQVNELLVVEYYSRQA.

A disordered region spans residues Thr-22–Ser-43. One can recognise an S4 RNA-binding domain in the interval Met-90 to Asn-152.

Belongs to the universal ribosomal protein uS4 family. Part of the 30S ribosomal subunit. Contacts protein S5. The interaction surface between S4 and S5 is involved in control of translational fidelity.

Its function is as follows. One of the primary rRNA binding proteins, it binds directly to 16S rRNA where it nucleates assembly of the body of the 30S subunit. In terms of biological role, with S5 and S12 plays an important role in translational accuracy. In Nostoc sp. (strain PCC 7120 / SAG 25.82 / UTEX 2576), this protein is Small ribosomal subunit protein uS4.